An 87-amino-acid chain; its full sequence is Sec-independent protein translocase protein TatA (87 aa).

Residues 1–21 form a helical membrane-spanning segment; sequence MGGMSITHWIVVAVVVMIFFG. A disordered region spans residues 40–87; sequence KKGMSEDDTTPPAAPPAPAPRLENQPLPPENTTQNVAQNVPNDIKNNQ. Over residues 69 to 87 the composition is skewed to polar residues; it reads ENTTQNVAQNVPNDIKNNQ.

Belongs to the TatA/E family. As to quaternary structure, the Tat system comprises two distinct complexes: a TatABC complex, containing multiple copies of TatA, TatB and TatC subunits, and a separate TatA complex, containing only TatA subunits. Substrates initially bind to the TatABC complex, which probably triggers association of the separate TatA complex to form the active translocon.

It is found in the cell inner membrane. Part of the twin-arginine translocation (Tat) system that transports large folded proteins containing a characteristic twin-arginine motif in their signal peptide across membranes. TatA could form the protein-conducting channel of the Tat system. The chain is Sec-independent protein translocase protein TatA from Zymomonas mobilis subsp. mobilis (strain ATCC 31821 / ZM4 / CP4).